The primary structure comprises 320 residues: Sensor histidine kinase YbdK (320 aa).

The chain crosses the membrane as a helical span at residues 1–21 (MLLFTAVISVPMLLLAVSVLM). Topologically, residues 22-41 (SVIYDSMFKPMNHGMPFHRS) are extracellular. Residues 42-62 (FAYPAMIVVFLISLLLLAFLF) traverse the membrane as a helical segment. The Cytoplasmic portion of the chain corresponds to 63–320 (SKSIHSLLHK…NGTGFLFSKE (258 aa)). The HAMP domain occupies 67 to 120 (HSLLHKINLLNQTIRHLASDQRVPDKIEVKRADEIGELIKSVNLLIERTTYREL). One can recognise a Histidine kinase domain in the interval 135-320 (KLRHDINTPL…NGTGFLFSKE (186 aa)). H138 bears the Phosphohistidine; by autocatalysis mark.

The protein localises to the cell membrane. It catalyses the reaction ATP + protein L-histidine = ADP + protein N-phospho-L-histidine.. Member of the two-component regulatory system YbdK/YbdJ. Probably activates YbdJ by phosphorylation. The polypeptide is Sensor histidine kinase YbdK (ybdK) (Bacillus subtilis (strain 168)).